Here is a 158-residue protein sequence, read N- to C-terminus: Copper transporter 2 (158 aa).

The interval 1 to 20 is disordered; the sequence is MDHDHMHDMPPPSPSSSSMS. 2 helical membrane-spanning segments follow: residues 53 to 73 and 104 to 124; these read GMYA…EWLA and YLVM…AIAG.

This sequence belongs to the copper transporter (Ctr) (TC 1.A.56) family. SLC31A subfamily. Highly expressed in leaves and at lower levels in roots, stems and flowers.

It localises to the membrane. Involved in the transport of copper. This Arabidopsis thaliana (Mouse-ear cress) protein is Copper transporter 2 (COPT2).